The following is an 824-amino-acid chain: Leucine--tRNA ligase (824 aa).

Positions 42–52 (PYPSGRIHMGH) match the 'HIGH' region motif. The short motif at 581–585 (KMSKS) is the 'KMSKS' region element. Lys584 contacts ATP.

This sequence belongs to the class-I aminoacyl-tRNA synthetase family.

It is found in the cytoplasm. It carries out the reaction tRNA(Leu) + L-leucine + ATP = L-leucyl-tRNA(Leu) + AMP + diphosphate. The polypeptide is Leucine--tRNA ligase (Geobacter metallireducens (strain ATCC 53774 / DSM 7210 / GS-15)).